A 504-amino-acid polypeptide reads, in one-letter code: Arabinose import ATP-binding protein AraG (504 aa).

2 consecutive ABC transporter domains span residues 8-243 (LSFR…MVGR) and 256-499 (YGEE…MPKV). 40 to 47 (GENGAGKS) is an ATP binding site.

Belongs to the ABC transporter superfamily. Arabinose importer (TC 3.A.1.2.2) family. In terms of assembly, the complex is composed of two ATP-binding proteins (AraG), two transmembrane proteins (AraH) and a solute-binding protein (AraF).

It localises to the cell inner membrane. The enzyme catalyses L-arabinose(out) + ATP + H2O = L-arabinose(in) + ADP + phosphate + H(+). Its function is as follows. Part of the ABC transporter complex AraFGH involved in arabinose import. Responsible for energy coupling to the transport system. The chain is Arabinose import ATP-binding protein AraG from Escherichia coli O157:H7.